A 409-amino-acid chain; its full sequence is Lysosome-associated membrane glycoprotein 1 (409 aa).

The first 25 residues, 1-25 (MAAPGGARRRPLLLLLFAGLVHGAS), serve as a signal peptide directing secretion. The segment at 26–187 (AVFVVKNGNG…SNFSREETRC (162 aa)) is first lumenal domain. The Lumenal portion of the chain corresponds to 26-374 (AVFVVKNGNG…EECQLDENSM (349 aa)). 10 N-linked (GlcNAc...) asparagine glycosylation sites follow: N34, N59, N72, N80, N103, N117, N126, N146, N161, and N179. An intrachain disulfide couples C38 to C76. Cysteines 151 and 187 form a disulfide. The segment at 180–207 (FSREETRCEQDLPTPTTPPQPAPTPAPA) is disordered. The tract at residues 188–219 (EQDLPTPTTPPQPAPTPAPASPAVFRYNVSGS) is hinge. A compositionally biased stretch (pro residues) spans 194-207 (PTTPPQPAPTPAPA). N-linked (GlcNAc...) asparagine glycosylation is found at N215, N220, N241, N253, N260, N285, N299, and N314. Residues 220–374 (NGTCLLASMG…EECQLDENSM (155 aa)) form a second lumenal domain region. A disulfide bridge connects residues C223 and C261. A disulfide bridge links C330 with C367. The chain crosses the membrane as a helical span at residues 375 to 398 (LIPIAVGGALAGLVLIVLLAYLIG). Over 399-409 (RKRSHAGYQTI) the chain is Cytoplasmic.

This sequence belongs to the LAMP family. In terms of assembly, interacts with ABCB9; this interaction strongly stabilizes ABCB9 and protects ABCB9 against lysosomal degradation. Interacts with FURIN. Interacts with TMEM175; inhibiting the proton channel activity of TMEM175. O- and N-glycosylated; some of the N-glycans attached to LAMP-1 are polylactosaminoglycans.

It localises to the lysosome membrane. The protein localises to the endosome membrane. The protein resides in the late endosome membrane. It is found in the cell membrane. Its subcellular location is the cytolytic granule membrane. In terms of biological role, lysosomal membrane glycoprotein which plays an important role in lysosome biogenesis, lysosomal pH regulation, autophagy and cholesterol homeostasis. Acts as an important regulator of lysosomal lumen pH regulation by acting as a direct inhibitor of the proton channel TMEM175, facilitating lysosomal acidification for optimal hydrolase activity. Also plays an important role in NK-cells cytotoxicity. Mechanistically, participates in cytotoxic granule movement to the cell surface and perforin trafficking to the lytic granule. In addition, protects NK-cells from degranulation-associated damage induced by their own cytotoxic granule content. Presents carbohydrate ligands to selectins. This is Lysosome-associated membrane glycoprotein 1 (LAMP1) from Bos taurus (Bovine).